A 264-amino-acid chain; its full sequence is uncharacterized protein (264 aa).

A run of 6 helical transmembrane segments spans residues 1 to 21 (MLLG…SVSL), 43 to 63 (FFGV…NGFV), 95 to 115 (VVGL…LSSL), 146 to 166 (IATW…LGGL), 181 to 201 (GWLA…QPFV), and 215 to 235 (IVAN…MFFP).

To M.pneumoniae MPN_308 C-terminal region.

It is found in the cell membrane. This is an uncharacterized protein from Mycoplasma pneumoniae (strain ATCC 29342 / M129 / Subtype 1) (Mycoplasmoides pneumoniae).